A 420-amino-acid polypeptide reads, in one-letter code: MSTPIETAWQLAKARYASLNIDVEAALEQLDQIPVSMHCWQGDDVAGFENTGGPLTGGIQATGNYPGKASTPDELRADLEQAFALIPGPKRLNLHAIYLESAQPVARNEIAPEHFRTWVEWAKRHQLGLDFNPTCFSHPLSADGFTLSHPDEKVRRFWIEHCQASRRISAYFGRELGTPSVMNIWVPDGMKDLTIDRLAFRQRLLSALDEIIAEPLDQAHHIDAVESKLFGIGAESFTVGSNEFYLGYAASRGTALCLDAGHFHPTEVISDKISSAILYVPRLLLHVSRPVRWDSDHVVLLDDETQAIAHEIVRHKLLNRVHIGLDFFDASINRIAAWVIGTRNMKKALLRALLEPTETLRKLEQNGDYTARLALLEEQKSLPWQAVWEHYCQCHDVIPGSEWLQQVRQYEETILTQRQG.

H262, D294, and D296 together coordinate Mn(2+).

It belongs to the rhamnose isomerase family. Homotetramer. It depends on Mn(2+) as a cofactor.

The protein resides in the cytoplasm. It catalyses the reaction L-rhamnopyranose = L-rhamnulose. Its pathway is carbohydrate degradation; L-rhamnose degradation; glycerone phosphate from L-rhamnose: step 1/3. In terms of biological role, catalyzes the interconversion of L-rhamnose and L-rhamnulose. This Pectobacterium carotovorum subsp. carotovorum (strain PC1) protein is L-rhamnose isomerase.